Here is a 565-residue protein sequence, read N- to C-terminus: CTP synthase (565 aa).

Residues 1-272 (MARPKNVKHI…DLRVMKKLGL (272 aa)) are amidoligase domain. CTP is bound at residue S18. UTP is bound at residue S18. 19-24 (SLGKGI) is an ATP binding site. Y59 contributes to the L-glutamine binding site. D76 is an ATP binding site. Positions 76 and 146 each coordinate Mg(2+). CTP-binding positions include 153–155 (DIE), 193–198 (KTKPTQ), and K229. Residues 193–198 (KTKPTQ) and K229 each bind UTP. The Glutamine amidotransferase type-1 domain occupies 299–543 (TIGVCGKYTE…VAAAKEYEKG (245 aa)). Position 363 (G363) interacts with L-glutamine. The active-site Nucleophile; for glutamine hydrolysis is C390. L-glutamine-binding positions include 391-394 (LGMQ), E414, and R471. Residues H516 and E518 contribute to the active site.

It belongs to the CTP synthase family. As to quaternary structure, homotetramer.

It carries out the reaction UTP + L-glutamine + ATP + H2O = CTP + L-glutamate + ADP + phosphate + 2 H(+). It catalyses the reaction L-glutamine + H2O = L-glutamate + NH4(+). The catalysed reaction is UTP + NH4(+) + ATP = CTP + ADP + phosphate + 2 H(+). It participates in pyrimidine metabolism; CTP biosynthesis via de novo pathway; CTP from UDP: step 2/2. Its activity is regulated as follows. Allosterically activated by GTP, when glutamine is the substrate; GTP has no effect on the reaction when ammonia is the substrate. The allosteric effector GTP functions by stabilizing the protein conformation that binds the tetrahedral intermediate(s) formed during glutamine hydrolysis. Inhibited by the product CTP, via allosteric rather than competitive inhibition. Catalyzes the ATP-dependent amination of UTP to CTP with either L-glutamine or ammonia as the source of nitrogen. Regulates intracellular CTP levels through interactions with the four ribonucleotide triphosphates. The chain is CTP synthase from Chlorobium phaeobacteroides (strain DSM 266 / SMG 266 / 2430).